We begin with the raw amino-acid sequence, 429 residues long: MAQPGTLNLNNEVVKMRKEVKRIRVLVIRKLVRSVGRLKSKKGTEDALLKNQRRAQRLLEEIHAMKELKPDIVTKSALGDDINFEKIFKKPDSTATERAIARLAVHPLLKKKIDVLKAAVQAFKEARQNVAEVESSKNASEDNHSENTLYSNDNGSNLQREATVISEQKVKETKILAKKPIHNSKEKIAKMEHGPKAVTIANSPSKPSEKDSVVSLESQKTPADPKLKTLSQTKKNKGSDSSLSGNSDGGEEFCEEEKEYFDDSTEERFYKQSSMSEDSDSGDDFFIGKVRRTRKKESSCHSSVKEQKPLEKVFLKEDTGETHGDTRNDKIKPSTETRKLESVFFHSLSGSKSSRRNFKEQAPKTRSLDFPQNEPQIKNQFNKKLSGRLENTKQQLQLPLHPSWEASRRRKEQQSNIAVFQGKKITFDD.

A2 carries the post-translational modification N-acetylalanine. 2 coiled-coil regions span residues 42 to 67 (KGTE…AMKE) and 108 to 146 (LLKK…NHSE). Disordered regions lie at residues 131 to 157 (AEVE…NGSN) and 176 to 429 (LAKK…TFDD). Residues 146–157 (ENTLYSNDNGSN) show a composition bias toward polar residues. The segment covering 183–195 (NSKEKIAKMEHGP) has biased composition (basic and acidic residues). A Glycyl lysine isopeptide (Lys-Gly) (interchain with G-Cter in SUMO2) cross-link involves residue K190. Phosphoserine occurs at positions 203, 205, 264, 279, and 281. Acidic residues predominate over residues 249–265 (GGEEFCEEEKEYFDDST). Positions 296-341 (KESSCHSSVKEQKPLEKVFLKEDTGETHGDTRNDKIKPSTETRKLE) are enriched in basic and acidic residues. K316 is covalently cross-linked (Glycyl lysine isopeptide (Lys-Gly) (interchain with G-Cter in SUMO2)). Residues S349, S351, and S367 each carry the phosphoserine modification. Basic and acidic residues predominate over residues 357–367 (NFKEQAPKTRS). A compositionally biased stretch (polar residues) spans 373-383 (NEPQIKNQFNK).

As to quaternary structure, interacts with SRF. Forms complexes with SRF and SRF cofactors ARID2, MYOCD and NKX2-5. Interacts with the N-terminus of SLC2A4. As to expression, abundantly expressed in heart and skeletal muscle, and at much lower levels in brain and lung.

It is found in the cytoplasm. It localises to the perinuclear region. May be involved in regulating transcriptional activation of cardiac genes during the aging process. May play a role in biosynthesis and/or processing of SLC2A4 in adipose cells. The chain is Serum response factor-binding protein 1 from Homo sapiens (Human).